Here is a 667-residue protein sequence, read N- to C-terminus: Bifunctional polymyxin resistance protein ArnA (667 aa).

Residues 1-304 (MKAIVFAYHD…EMGIVTDVRL (304 aa)) are formyltransferase ArnAFT. Residue H104 is the Proton donor; for formyltransferase activity of the active site. (6R)-10-formyltetrahydrofolate is bound by residues R114 and 136-140 (VKKAD). Residues 314–667 (RRTRVLILGV…TAAPKDELNA (354 aa)) are dehydrogenase ArnADH. Residues D347 and 368–369 (DI) each bind NAD(+). UDP-alpha-D-glucuronate is bound by residues A393, Y398, and 432–433 (TS). E434 acts as the Proton acceptor; for decarboxylase activity in catalysis. UDP-alpha-D-glucuronate is bound by residues R460, N492, 526–535 (KLVDGGAQKR), and Y613. Catalysis depends on R619, which acts as the Proton donor; for decarboxylase activity.

The protein in the N-terminal section; belongs to the Fmt family. UDP-L-Ara4N formyltransferase subfamily. It in the C-terminal section; belongs to the NAD(P)-dependent epimerase/dehydratase family. UDP-glucuronic acid decarboxylase subfamily. Homohexamer, formed by a dimer of trimers.

It carries out the reaction UDP-alpha-D-glucuronate + NAD(+) = UDP-beta-L-threo-pentopyranos-4-ulose + CO2 + NADH. The enzyme catalyses UDP-4-amino-4-deoxy-beta-L-arabinose + (6R)-10-formyltetrahydrofolate = UDP-4-deoxy-4-formamido-beta-L-arabinose + (6S)-5,6,7,8-tetrahydrofolate + H(+). Its pathway is nucleotide-sugar biosynthesis; UDP-4-deoxy-4-formamido-beta-L-arabinose biosynthesis; UDP-4-deoxy-4-formamido-beta-L-arabinose from UDP-alpha-D-glucuronate: step 1/3. It functions in the pathway nucleotide-sugar biosynthesis; UDP-4-deoxy-4-formamido-beta-L-arabinose biosynthesis; UDP-4-deoxy-4-formamido-beta-L-arabinose from UDP-alpha-D-glucuronate: step 3/3. The protein operates within bacterial outer membrane biogenesis; lipopolysaccharide biosynthesis. Bifunctional enzyme that catalyzes the oxidative decarboxylation of UDP-glucuronic acid (UDP-GlcUA) to UDP-4-keto-arabinose (UDP-Ara4O) and the addition of a formyl group to UDP-4-amino-4-deoxy-L-arabinose (UDP-L-Ara4N) to form UDP-L-4-formamido-arabinose (UDP-L-Ara4FN). The modified arabinose is attached to lipid A and is required for resistance to polymyxin and cationic antimicrobial peptides. The chain is Bifunctional polymyxin resistance protein ArnA from Yersinia pestis bv. Antiqua (strain Antiqua).